The chain runs to 347 residues: MRAMRLVEIGKPLKLEDIPIPKPKGSQVLIKIEAAGVCHSDVHMRQGRFGNLRIVEDLGVKLPVTLGHEIAGRIEEVGDEVVGYSKGDLVAVNPWEGEGNCYYCRIGEEHLCDSPRWLGINYDGAYAEYVLVPHYKYLYKLRRLSAVEAAPLTCSGVTTYRAVRKASLDPSKTLVVIGAGGGLGTMAIQIAKAVSGATIIGVDVREEALEAAKRAGADYVINASSQDPVSEIRRITQGKGADAVIDLNNSEKTLSIYPYVLAKQGKYVMVGLFGADLKYHAPLITLNEVQFIGSLVGNQSDFLGIMSLAEAGKVKPMVTKTMKLEEANEAIDNLENFKAVGRQVLVP.

The residue at position 11 (K11) is an N6-methyllysine. Zn(2+)-binding residues include C38, H68, E98, C101, C104, C112, and C154. Position 213 is an N6-methyllysine (K213).

Belongs to the zinc-containing alcohol dehydrogenase family. Homodimer and homotetramer. The cofactor is Zn(2+).

The catalysed reaction is a primary alcohol + NAD(+) = an aldehyde + NADH + H(+). It carries out the reaction a secondary alcohol + NAD(+) = a ketone + NADH + H(+). The sequence is that of NAD-dependent alcohol dehydrogenase (adh) from Sulfurisphaera tokodaii (strain DSM 16993 / JCM 10545 / NBRC 100140 / 7) (Sulfolobus tokodaii).